The following is a 70-amino-acid chain: Small ribosomal subunit protein bS21 (70 aa).

It belongs to the bacterial ribosomal protein bS21 family.

This Helicobacter pylori (strain J99 / ATCC 700824) (Campylobacter pylori J99) protein is Small ribosomal subunit protein bS21 (rpsU).